A 1374-amino-acid polypeptide reads, in one-letter code: DNA-directed RNA polymerase subunit beta (1374 aa).

It belongs to the RNA polymerase beta chain family. In terms of assembly, the RNAP catalytic core consists of 2 alpha, 1 beta, 1 beta' and 1 omega subunit. When a sigma factor is associated with the core the holoenzyme is formed, which can initiate transcription.

It catalyses the reaction RNA(n) + a ribonucleoside 5'-triphosphate = RNA(n+1) + diphosphate. Its function is as follows. DNA-dependent RNA polymerase catalyzes the transcription of DNA into RNA using the four ribonucleoside triphosphates as substrates. The protein is DNA-directed RNA polymerase subunit beta of Methylobacterium radiotolerans (strain ATCC 27329 / DSM 1819 / JCM 2831 / NBRC 15690 / NCIMB 10815 / 0-1).